A 285-amino-acid polypeptide reads, in one-letter code: Dihydropteroate synthase (285 aa).

Residues 18-276 (PKIMGIVNLT…DVKATADALK (259 aa)) enclose the Pterin-binding domain. Asn-25 contacts Mg(2+). (7,8-dihydropterin-6-yl)methyl diphosphate-binding positions include Thr-66, Asp-99, Asn-119, Asp-190, Lys-229, and 264–266 (RVH).

This sequence belongs to the DHPS family. In terms of assembly, homodimer. It depends on Mg(2+) as a cofactor.

The enzyme catalyses (7,8-dihydropterin-6-yl)methyl diphosphate + 4-aminobenzoate = 7,8-dihydropteroate + diphosphate. It participates in cofactor biosynthesis; tetrahydrofolate biosynthesis; 7,8-dihydrofolate from 2-amino-4-hydroxy-6-hydroxymethyl-7,8-dihydropteridine diphosphate and 4-aminobenzoate: step 1/2. In terms of biological role, catalyzes the condensation of para-aminobenzoate (pABA) with 6-hydroxymethyl-7,8-dihydropterin diphosphate (DHPt-PP) to form 7,8-dihydropteroate (H2Pte), the immediate precursor of folate derivatives. The polypeptide is Dihydropteroate synthase (folP) (Neisseria meningitidis serogroup B (strain ATCC BAA-335 / MC58)).